We begin with the raw amino-acid sequence, 133 residues long: MIIGIGVDIIEIERVRQAIQNNKNFLSKLFTERELDYFISRNMNSEVIAGNFAAKEAVSKALGTGIRGFSFKDIEILRNELGKPEVILHNGANLIGNKLVGNNNSLRVHLSISHNNSSAIAYSVLEGEYYGNM.

Residues Asp-8 and Glu-56 each contribute to the Mg(2+) site.

It belongs to the P-Pant transferase superfamily. AcpS family. Mg(2+) is required as a cofactor.

The protein resides in the cytoplasm. The catalysed reaction is apo-[ACP] + CoA = holo-[ACP] + adenosine 3',5'-bisphosphate + H(+). Transfers the 4'-phosphopantetheine moiety from coenzyme A to a Ser of acyl-carrier-protein. The polypeptide is Holo-[acyl-carrier-protein] synthase (Clostridium perfringens (strain 13 / Type A)).